The primary structure comprises 1433 residues: Pleckstrin homology domain-containing family H member 1 (1433 aa).

A coiled-coil region spans residues 40-174 (NIRHLLAERM…QILMLQDKLQ (135 aa)). Disordered stretches follow at residues 247 to 346 (DKAD…LSPP) and 552 to 634 (SSVP…TSSY). Over residues 252–266 (PKSSQDGVDATSTVK) the composition is skewed to polar residues. A compositionally biased stretch (basic and acidic residues) spans 279 to 299 (MRDRAMGGASDRDHSSDELNS). Over residues 308–318 (SSSSSSSSSSS) the composition is skewed to low complexity. Residues 332–343 (TPTPKSPPPVSL) show a composition bias toward pro residues. Acidic residues predominate over residues 557 to 567 (PDDDSGSEDDS). Residues 568–578 (SSLASLHTSTL) show a composition bias toward low complexity. A compositionally biased stretch (polar residues) spans 597-606 (VSTSSISSES). 2 PH domains span residues 643–737 (TLEK…NVLK) and 751–859 (KPTA…VAAG). A MyTH4 domain is found at 896 to 1050 (FSKEGLRYPL…PSRMEILSIL (155 aa)). Residues 1061-1392 (FSIPVHFMNN…SYINYWTSSL (332 aa)) enclose the FERM domain.

In terms of biological role, critical component of the guidance pathway underlying endothelial cell migration and blood vessel patterning. Involved in mediating membrane localization of ephrin proteins, which have been shown to provide guidance cues for endothelial cell migration. This is Pleckstrin homology domain-containing family H member 1 (plekhh1) from Danio rerio (Zebrafish).